Here is a 284-residue protein sequence, read N- to C-terminus: L-ribulose-5-phosphate 3-epimerase UlaE (284 aa).

Belongs to the L-ribulose-5-phosphate 3-epimerase family.

The catalysed reaction is L-ribulose 5-phosphate = L-xylulose 5-phosphate. It functions in the pathway cofactor degradation; L-ascorbate degradation; D-xylulose 5-phosphate from L-ascorbate: step 3/4. Catalyzes the isomerization of L-xylulose-5-phosphate to L-ribulose-5-phosphate. Is involved in the anaerobic L-ascorbate utilization. The chain is L-ribulose-5-phosphate 3-epimerase UlaE from Salmonella typhimurium (strain LT2 / SGSC1412 / ATCC 700720).